We begin with the raw amino-acid sequence, 316 residues long: MSEQVYLDLARTILEEGHYKGDRTNTGTYSLFGYQMRFNLQEGFPLLTTKKMPFGLIKSELLWFLKGDSNIRYLLQHNNHIWDEWAFERFVKSTDYTGPDMTDFSHRAQDDADFKVVYQEQMRLFNDRILADEGFAKQYGELGDIYGKQWRAWQTRSGETIDQIKNVIEMIKTNPDSRRLIVSAWNPEDVPSMALPPCHTMFQFYVNDGKLSCQLYQRSGDVFLGVPFNIASYALLTHLIAHETGLEVGEFIHTLGDAHIYSNHVTQVKTQLARSMHAAPKLWLNPDKKSIFDFDVADIKVENYESEPAIKAPVAV.

Residues R23 and 178–179 each bind dUMP; that span reads RR. C198 functions as the Nucleophile in the catalytic mechanism. Residues 218–221, N229, and 259–261 contribute to the dUMP site; these read RSGD and HIY. D221 is a (6R)-5,10-methylene-5,6,7,8-tetrahydrofolate binding site. (6R)-5,10-methylene-5,6,7,8-tetrahydrofolate is bound at residue A315.

This sequence belongs to the thymidylate synthase family. Bacterial-type ThyA subfamily. As to quaternary structure, homodimer.

The protein localises to the cytoplasm. The catalysed reaction is dUMP + (6R)-5,10-methylene-5,6,7,8-tetrahydrofolate = 7,8-dihydrofolate + dTMP. It participates in pyrimidine metabolism; dTTP biosynthesis. In terms of biological role, catalyzes the reductive methylation of 2'-deoxyuridine-5'-monophosphate (dUMP) to 2'-deoxythymidine-5'-monophosphate (dTMP) while utilizing 5,10-methylenetetrahydrofolate (mTHF) as the methyl donor and reductant in the reaction, yielding dihydrofolate (DHF) as a by-product. This enzymatic reaction provides an intracellular de novo source of dTMP, an essential precursor for DNA biosynthesis. This chain is Thymidylate synthase, found in Latilactobacillus sakei subsp. sakei (strain 23K) (Lactobacillus sakei subsp. sakei).